The primary structure comprises 236 residues: 2,3,4,5-tetrahydropyridine-2,6-dicarboxylate N-acetyltransferase (236 aa).

The protein belongs to the transferase hexapeptide repeat family. DapH subfamily.

The catalysed reaction is (S)-2,3,4,5-tetrahydrodipicolinate + acetyl-CoA + H2O = L-2-acetamido-6-oxoheptanedioate + CoA. It functions in the pathway amino-acid biosynthesis; L-lysine biosynthesis via DAP pathway; LL-2,6-diaminopimelate from (S)-tetrahydrodipicolinate (acetylase route): step 1/3. Its function is as follows. Catalyzes the transfer of an acetyl group from acetyl-CoA to tetrahydrodipicolinate. The sequence is that of 2,3,4,5-tetrahydropyridine-2,6-dicarboxylate N-acetyltransferase from Clostridium botulinum (strain Kyoto / Type A2).